Reading from the N-terminus, the 457-residue chain is Argininosuccinate lyase (457 aa).

This sequence belongs to the lyase 1 family. Argininosuccinate lyase subfamily.

It is found in the cytoplasm. The enzyme catalyses 2-(N(omega)-L-arginino)succinate = fumarate + L-arginine. It functions in the pathway amino-acid biosynthesis; L-arginine biosynthesis; L-arginine from L-ornithine and carbamoyl phosphate: step 3/3. This is Argininosuccinate lyase from Yersinia pseudotuberculosis serotype O:3 (strain YPIII).